Reading from the N-terminus, the 423-residue chain is COP9 signalosome complex subunit 3 (423 aa).

The residue at position 2 (Ala-2) is an N-acetylalanine. A PCI domain is found at 197–365 (NFERALYFYE…GMVSFHDNPE (169 aa)). Positions 402–423 (QFVQKSMGSQEDDSGNKPSSYS) are disordered. Residues Ser-407, Ser-410, and Ser-423 each carry the phosphoserine modification.

Belongs to the CSN3 family. Component of the CSN complex, composed of COPS1/GPS1, COPS2, COPS3, COPS4, COPS5, COPS6, COPS7 (COPS7A or COPS7B), COPS8 and COPS9 isoform 1. In the complex, it probably interacts directly with COPS1, COPS4, COPS8 and COPS9 isoform 1. Interacts with CK2 and PKD. Interacts with the translation initiation factor EIF3S6 and IKBKG. Interacts with ERCC6. In terms of tissue distribution, widely expressed. Expressed at high level in heart and skeletal muscle.

It is found in the cytoplasm. Its subcellular location is the nucleus. Its function is as follows. Component of the COP9 signalosome complex (CSN), a complex involved in various cellular and developmental processes. The CSN complex is an essential regulator of the ubiquitin (Ubl) conjugation pathway by mediating the deneddylation of the cullin subunits of SCF-type E3 ligase complexes, leading to decrease the Ubl ligase activity of SCF-type complexes such as SCF, CSA or DDB2. The complex is also involved in phosphorylation of p53/TP53, c-jun/JUN, IkappaBalpha/NFKBIA, ITPK1 and IRF8/ICSBP, possibly via its association with CK2 and PKD kinases. CSN-dependent phosphorylation of TP53 and JUN promotes and protects degradation by the Ubl system, respectively. The chain is COP9 signalosome complex subunit 3 (COPS3) from Homo sapiens (Human).